Reading from the N-terminus, the 337-residue chain is Aspartate carbamoyltransferase catalytic subunit (337 aa).

Residues Arg54 and Thr55 each contribute to the carbamoyl phosphate site. Lys82 provides a ligand contact to L-aspartate. Carbamoyl phosphate contacts are provided by Arg104, His134, and Gln137. L-aspartate is bound by residues Arg177 and Arg232. Carbamoyl phosphate-binding residues include Gly277 and Pro278.

The protein belongs to the aspartate/ornithine carbamoyltransferase superfamily. ATCase family. As to quaternary structure, heterododecamer (2C3:3R2) of six catalytic PyrB chains organized as two trimers (C3), and six regulatory PyrI chains organized as three dimers (R2).

It catalyses the reaction carbamoyl phosphate + L-aspartate = N-carbamoyl-L-aspartate + phosphate + H(+). The protein operates within pyrimidine metabolism; UMP biosynthesis via de novo pathway; (S)-dihydroorotate from bicarbonate: step 2/3. Functionally, catalyzes the condensation of carbamoyl phosphate and aspartate to form carbamoyl aspartate and inorganic phosphate, the committed step in the de novo pyrimidine nucleotide biosynthesis pathway. This is Aspartate carbamoyltransferase catalytic subunit from Arthrobacter sp. (strain FB24).